The sequence spans 98 residues: uncharacterized protein (98 aa).

Belongs to the HHV-5 UL19 protein family.

This is an uncharacterized protein from Human cytomegalovirus (strain AD169) (HHV-5).